The sequence spans 92 residues: Acylphosphatase (92 aa).

C5 and C49 form a disulfide bridge. Residues 5–92 (CIIAWVYGRV…SGELTDFRIR (88 aa)) form the Acylphosphatase-like domain. Residues R20 and N38 contribute to the active site.

Belongs to the acylphosphatase family.

It catalyses the reaction an acyl phosphate + H2O = a carboxylate + phosphate + H(+). The polypeptide is Acylphosphatase (Escherichia coli O157:H7).